The chain runs to 444 residues: Phosphoribosylamine--glycine ligase (444 aa).

The ATP-grasp domain occupies 109-324; that stretch reads RNLFKKYEID…FLDVCFAIAE (216 aa). 140–202 contributes to the ATP binding site; sequence MTSLGKDVVV…EEKLVGVEFT (63 aa). Mg(2+) is bound by residues glutamine 282, glutamate 294, and asparagine 296. 3 residues coordinate Mn(2+): glutamine 282, glutamate 294, and asparagine 296.

This sequence belongs to the GARS family. Requires Mg(2+) as cofactor. Mn(2+) serves as cofactor.

The catalysed reaction is 5-phospho-beta-D-ribosylamine + glycine + ATP = N(1)-(5-phospho-beta-D-ribosyl)glycinamide + ADP + phosphate + H(+). The protein operates within purine metabolism; IMP biosynthesis via de novo pathway; N(1)-(5-phospho-D-ribosyl)glycinamide from 5-phospho-alpha-D-ribose 1-diphosphate: step 2/2. In Methanococcus maripaludis (strain C7 / ATCC BAA-1331), this protein is Phosphoribosylamine--glycine ligase.